The following is a 720-amino-acid chain: MAAQCCCRKAPGAEAAPARPPPEPPPALDVASASSAQLFRLRHLQLGLELRPEARELAGCLVLELCALRPAPRALVLDAHPALRLHSVSFRRASAVSESPCTFAFPAPGSGPPLPGFADAPGAESASCPLAFRLDPFTDYGSSLTVTLPPEVQAHQPFQVILRYTSTDAPAIWWLDPELTYGNAKPFVFTQGHSVCNRSFFPCFDTPAVKCTYSAVVKAPLGVQVLMSATQSVYVEEEGLYHFHMEHPVPAYLVALVAGDLKPADIGPRSRVWAEPCLLPTATSKLSGAVEQWLSAAERLYGPYMWGRYDIVFLPPSFPIVAMENPCLTFIISSILESDEFLVIDVIHEVAHSWFGNAVTNATWEEMWLSEGLATYAQRRITTETYGAAFTCLETAFRLDALHRQMRLLGEDSPVSKLQVKLEPGVNPSHLMNLFTYEKGYCFVYYLSQLCGGPQRFDDFLRAYVEKYKFTSVVAQDLLDSFLSFFPELKEQSVDCRAGLEFERWLNATGPPLAEPDLSQGSSLTRPVEALFQLWTAEPLEQAAASASAIDISKWRTFQTALFLDRLLDGSPLPQEVVMSLSKCYSSLLDSMNAEIRIRWLQIVVRNDYYPDLHRVRRFLESQMSRMYTIPLYEDLCTGALKSFALEVFYQTQGRLHPNLRRTIQQILSQGLGPSAEPSTEPSTDLGGAEADTNPDSPALLLGDEAPSSTISLRDVNVSA.

321-325 (VAMEN) lines the substrate pocket. His-348 lines the Zn(2+) pocket. The Proton acceptor role is filled by Glu-349. 2 residues coordinate Zn(2+): His-352 and Glu-371. Positions 671-708 (GLGPSAEPSTEPSTDLGGAEADTNPDSPALLLGDEAPS) are disordered.

This sequence belongs to the peptidase M1 family. It depends on Zn(2+) as a cofactor.

The enzyme catalyses Release of N-terminal amino acids, preferentially methionine, from peptides and arylamides.. Its function is as follows. Broad specificity aminopeptidase which preferentially hydrolyzes an N-terminal methionine, citrulline or glutamine. The sequence is that of Aminopeptidase RNPEPL1 from Mus musculus (Mouse).